The chain runs to 355 residues: 3-dehydroquinate synthase (355 aa).

NAD(+) contacts are provided by residues 71 to 76 (EGEASK), 105 to 109 (GVVGD), 129 to 130 (TS), lysine 142, lysine 151, and 169 to 172 (TLNT). Glutamate 184, histidine 246, and histidine 263 together coordinate Zn(2+).

It belongs to the sugar phosphate cyclases superfamily. Dehydroquinate synthase family. NAD(+) serves as cofactor. Co(2+) is required as a cofactor. The cofactor is Zn(2+).

The protein resides in the cytoplasm. The enzyme catalyses 7-phospho-2-dehydro-3-deoxy-D-arabino-heptonate = 3-dehydroquinate + phosphate. It participates in metabolic intermediate biosynthesis; chorismate biosynthesis; chorismate from D-erythrose 4-phosphate and phosphoenolpyruvate: step 2/7. Functionally, catalyzes the conversion of 3-deoxy-D-arabino-heptulosonate 7-phosphate (DAHP) to dehydroquinate (DHQ). The chain is 3-dehydroquinate synthase from Streptococcus mutans serotype c (strain ATCC 700610 / UA159).